The primary structure comprises 801 residues: Elongation factor G, mitochondrial (801 aa).

The transit peptide at 1–62 directs the protein to the mitochondrion; it reads MRTPTLARLP…LSKHFQQRRN (62 aa). The tr-type G domain occupies 99–386; it reads SRVRNIGIAA…GVIDYLPNPS (288 aa). GTP is bound by residues 108 to 115, 184 to 188, and 238 to 241; these read AHIDSGKT, DTPGH, and NKMD.

The protein belongs to the TRAFAC class translation factor GTPase superfamily. Classic translation factor GTPase family. EF-G/EF-2 subfamily.

It localises to the mitochondrion. The protein operates within protein biosynthesis; polypeptide chain elongation. Its function is as follows. Mitochondrial GTPase that catalyzes the GTP-dependent ribosomal translocation step during translation elongation. During this step, the ribosome changes from the pre-translocational (PRE) to the post-translocational (POST) state as the newly formed A-site-bound peptidyl-tRNA and P-site-bound deacylated tRNA move to the P and E sites, respectively. Catalyzes the coordinated movement of the two tRNA molecules, the mRNA and conformational changes in the ribosome. The sequence is that of Elongation factor G, mitochondrial (mef1) from Aspergillus niger (strain ATCC MYA-4892 / CBS 513.88 / FGSC A1513).